The following is a 300-amino-acid chain: MTDTPDPAAVLSPAVKAAVLSEALPYIRRFHGKTIVVKYGGNAMTEERLQRSFAHDVVLLKLVGLNPVVVHGGGPQIDDALRRIGKQGTFVQGMRVTDAETMEVVEWVLGGQVQQDIVMMINEVGGKAVGLTGKDGMLIQATKKLMVNKDDPSQPLDIGLVGDITRVEPAVVKALQDDQFIPVISPIGYGEDGTAYNINADVVAGKMAEVLGAEKLLMMTNTPGVLDKGGKLLRSLSAQTIDELFADGTISGGMLPKISSSLDAAKNGVNSVHIVDGRVPHCLLLEILTDQGVGTMISSH.

Substrate is bound by residues 73–74 (GG), arginine 95, and asparagine 197.

The protein belongs to the acetylglutamate kinase family. ArgB subfamily.

It localises to the cytoplasm. The enzyme catalyses N-acetyl-L-glutamate + ATP = N-acetyl-L-glutamyl 5-phosphate + ADP. Its pathway is amino-acid biosynthesis; L-arginine biosynthesis; N(2)-acetyl-L-ornithine from L-glutamate: step 2/4. Functionally, catalyzes the ATP-dependent phosphorylation of N-acetyl-L-glutamate. This Bordetella pertussis (strain Tohama I / ATCC BAA-589 / NCTC 13251) protein is Acetylglutamate kinase.